The following is a 254-amino-acid chain: Type III pantothenate kinase 2 (254 aa).

Residue 6 to 13 (DMGNSHIH) coordinates ATP. 107-110 (GADR) provides a ligand contact to substrate. The active-site Proton acceptor is the Asp109. Asp130 contacts K(+). Residue Thr133 participates in ATP binding. Thr185 is a binding site for substrate.

Belongs to the type III pantothenate kinase family. As to quaternary structure, homodimer. It depends on NH4(+) as a cofactor. The cofactor is K(+).

Its subcellular location is the cytoplasm. It catalyses the reaction (R)-pantothenate + ATP = (R)-4'-phosphopantothenate + ADP + H(+). Its pathway is cofactor biosynthesis; coenzyme A biosynthesis; CoA from (R)-pantothenate: step 1/5. Its function is as follows. Catalyzes the phosphorylation of pantothenate (Pan), the first step in CoA biosynthesis. The chain is Type III pantothenate kinase 2 from Francisella tularensis subsp. holarctica (strain LVS).